We begin with the raw amino-acid sequence, 328 residues long: Phosphatidate cytidylyltransferase (328 aa).

Polar residues predominate over residues 15–29; sequence SGRSATKSVTTNDAG. A disordered region spans residues 15 to 50; sequence SGRSATKSVTTNDAGTGNPAEQPARGAKQQPATETS. Helical transmembrane passes span 58-78, 103-123, 124-144, 173-193, 202-222, 239-259, and 263-283; these read AAIV…VFVP, AGYL…VWLT, WPFG…VCMI, ATVF…MLVY, FCMM…GVLF, GFAG…TFLV, and PWIG…GDLV.

The protein belongs to the CDS family.

It is found in the cell membrane. It carries out the reaction a 1,2-diacyl-sn-glycero-3-phosphate + CTP + H(+) = a CDP-1,2-diacyl-sn-glycerol + diphosphate. The protein operates within phospholipid metabolism; CDP-diacylglycerol biosynthesis; CDP-diacylglycerol from sn-glycerol 3-phosphate: step 3/3. The protein is Phosphatidate cytidylyltransferase (cdsA) of Mycobacterium tuberculosis (strain CDC 1551 / Oshkosh).